A 222-amino-acid polypeptide reads, in one-letter code: Endonuclease V (222 aa).

2 residues coordinate Mg(2+): Asp43 and Asp109.

It belongs to the endonuclease V family. Mg(2+) is required as a cofactor.

Its subcellular location is the cytoplasm. It carries out the reaction Endonucleolytic cleavage at apurinic or apyrimidinic sites to products with a 5'-phosphate.. Functionally, DNA repair enzyme involved in the repair of deaminated bases. Selectively cleaves double-stranded DNA at the second phosphodiester bond 3' to a deoxyinosine leaving behind the intact lesion on the nicked DNA. This Roseiflexus sp. (strain RS-1) protein is Endonuclease V.